Here is a 70-residue protein sequence, read N- to C-terminus: Protein SlyX homolog (70 aa).

It belongs to the SlyX family.

The chain is Protein SlyX homolog from Shewanella piezotolerans (strain WP3 / JCM 13877).